The sequence spans 155 residues: Transcriptional repressor NrdR (155 aa).

A zinc finger lies at 3–34; the sequence is CPFCHAEETKVVDSRLVADGAQVRRRRECLEC. Residues 49-139 enclose the ATP-cone domain; the sequence is PLIIKRDGRR…VYKRFKDVSD (91 aa).

This sequence belongs to the NrdR family. Zn(2+) is required as a cofactor.

In terms of biological role, negatively regulates transcription of bacterial ribonucleotide reductase nrd genes and operons by binding to NrdR-boxes. The sequence is that of Transcriptional repressor NrdR from Legionella pneumophila (strain Paris).